A 130-amino-acid chain; its full sequence is Holo-[acyl-carrier-protein] synthase (130 aa).

2 residues coordinate Mg(2+): Asp-9 and Glu-58.

It belongs to the P-Pant transferase superfamily. AcpS family. It depends on Mg(2+) as a cofactor.

It localises to the cytoplasm. The catalysed reaction is apo-[ACP] + CoA = holo-[ACP] + adenosine 3',5'-bisphosphate + H(+). Transfers the 4'-phosphopantetheine moiety from coenzyme A to a Ser of acyl-carrier-protein. The chain is Holo-[acyl-carrier-protein] synthase from Mycobacterium sp. (strain JLS).